We begin with the raw amino-acid sequence, 700 residues long: Elongation factor G (700 aa).

The region spanning 8 to 290 (ERYRNIGISA…AVIDYLPAPT (283 aa)) is the tr-type G domain. GTP contacts are provided by residues 17 to 24 (AHIDAGKT), 88 to 92 (DTPGH), and 142 to 145 (NKMD).

This sequence belongs to the TRAFAC class translation factor GTPase superfamily. Classic translation factor GTPase family. EF-G/EF-2 subfamily.

It is found in the cytoplasm. In terms of biological role, catalyzes the GTP-dependent ribosomal translocation step during translation elongation. During this step, the ribosome changes from the pre-translocational (PRE) to the post-translocational (POST) state as the newly formed A-site-bound peptidyl-tRNA and P-site-bound deacylated tRNA move to the P and E sites, respectively. Catalyzes the coordinated movement of the two tRNA molecules, the mRNA and conformational changes in the ribosome. This Glaesserella parasuis serovar 5 (strain SH0165) (Haemophilus parasuis) protein is Elongation factor G.